The primary structure comprises 198 residues: Recombination protein RecR (198 aa).

The C4-type zinc-finger motif lies at 57–72; the sequence is CLNCGCLTDEAACYFC. The region spanning 80–175 is the Toprim domain; the sequence is QIICVTAFPR…QISRLAFGLP (96 aa).

It belongs to the RecR family.

Functionally, may play a role in DNA repair. It seems to be involved in an RecBC-independent recombinational process of DNA repair. It may act with RecF and RecO. This is Recombination protein RecR from Protochlamydia amoebophila (strain UWE25).